The chain runs to 94 residues: Small ribosomal subunit protein uS19 (94 aa).

Belongs to the universal ribosomal protein uS19 family.

Functionally, protein S19 forms a complex with S13 that binds strongly to the 16S ribosomal RNA. The polypeptide is Small ribosomal subunit protein uS19 (Clostridium novyi (strain NT)).